We begin with the raw amino-acid sequence, 159 residues long: Small ribosomal subunit protein uS17 (159 aa).

The protein belongs to the universal ribosomal protein uS17 family.

Its subcellular location is the cytoplasm. This is Small ribosomal subunit protein uS17 (RPS11) from Zea mays (Maize).